The primary structure comprises 368 residues: Peptide chain release factor 2 (368 aa).

The residue at position 251 (Q251) is an N5-methylglutamine.

The protein belongs to the prokaryotic/mitochondrial release factor family. Methylated by PrmC. Methylation increases the termination efficiency of RF2.

Its subcellular location is the cytoplasm. Its function is as follows. Peptide chain release factor 2 directs the termination of translation in response to the peptide chain termination codons UGA and UAA. The chain is Peptide chain release factor 2 from Nitratiruptor sp. (strain SB155-2).